The following is a 154-amino-acid chain: Ribosome maturation factor RimP (154 aa).

It belongs to the RimP family.

It is found in the cytoplasm. Its function is as follows. Required for maturation of 30S ribosomal subunits. The sequence is that of Ribosome maturation factor RimP from Carboxydothermus hydrogenoformans (strain ATCC BAA-161 / DSM 6008 / Z-2901).